Reading from the N-terminus, the 203-residue chain is Small ribosomal subunit protein uS4 (203 aa).

One can recognise an S4 RNA-binding domain in the interval 93-156 (QRLDNVVFRL…MKVPAILEAV (64 aa)).

Belongs to the universal ribosomal protein uS4 family. As to quaternary structure, part of the 30S ribosomal subunit. Contacts protein S5. The interaction surface between S4 and S5 is involved in control of translational fidelity.

Its function is as follows. One of the primary rRNA binding proteins, it binds directly to 16S rRNA where it nucleates assembly of the body of the 30S subunit. Functionally, with S5 and S12 plays an important role in translational accuracy. This chain is Small ribosomal subunit protein uS4, found in Lactococcus lactis subsp. lactis (strain IL1403) (Streptococcus lactis).